Consider the following 431-residue polypeptide: Tol-Pal system protein TolB (431 aa).

Positions 1 to 26 (MSLMTKLGFRALVASCLITAGSAANA) are cleaved as a signal peptide. Residues 406-431 (DGSAPPQILSVQGGSVREPSWGPFMQ) are disordered.

Belongs to the TolB family. As to quaternary structure, the Tol-Pal system is composed of five core proteins: the inner membrane proteins TolA, TolQ and TolR, the periplasmic protein TolB and the outer membrane protein Pal. They form a network linking the inner and outer membranes and the peptidoglycan layer.

The protein resides in the periplasm. Its function is as follows. Part of the Tol-Pal system, which plays a role in outer membrane invagination during cell division and is important for maintaining outer membrane integrity. The polypeptide is Tol-Pal system protein TolB (Burkholderia orbicola (strain AU 1054)).